The chain runs to 318 residues: Transcription factor zip-4 (318 aa).

The span at 1-13 (MYNYNYSRGNKSM) shows a compositional bias: polar residues. Disordered regions lie at residues 1-20 (MYNY…PRFH), 147-205 (EKKP…TAAA), 238-257 (NNDA…LQKD), and 273-318 (ELQS…KSNY). Residues 173–190 (DYQEEGETSLSDNDESVD) show a composition bias toward acidic residues. The bZIP domain maps to 228 to 291 (EPIYKLKRAR…ERDQQLIKQL (64 aa)). The interval 232–266 (KLKRARNNDAVRKSRNKAKELQLQKDEEYDEMKKR) is basic motif. Residues 242 to 280 (VRKSRNKAKELQLQKDEEYDEMKKRITQLEAELQSEREG) adopt a coiled-coil conformation. The tract at residues 267–274 (ITQLEAEL) is leucine-zipper. A compositionally biased stretch (basic and acidic residues) spans 275 to 298 (QSEREGRERDQQLIKQLIREKEST). A compositionally biased stretch (polar residues) spans 307 to 318 (RNALESFNKSNY).

This sequence belongs to the bZIP family. C/EBP subfamily.

It is found in the nucleus. Its function is as follows. Transcription factor that binds to the promoter and the enhancer regions of target genes. Involved in responding to mitochondrial damage. Has a protective role in response to infection by the Gram-negative bacterium P.aeruginosa. The protein is Transcription factor zip-4 of Caenorhabditis elegans.